The chain runs to 949 residues: uncharacterized protein (949 aa).

One can recognise a Calponin-homology (CH) domain in the interval 64–170 (LCSVHEAKKW…YCLHALSYLL (107 aa)).

The protein resides in the nucleus. This is an uncharacterized protein from Schizosaccharomyces pombe (strain 972 / ATCC 24843) (Fission yeast).